The chain runs to 314 residues: DNA-directed RNA polymerase subunit alpha (314 aa).

An alpha N-terminal domain (alpha-NTD) region spans residues 1 to 227 (MLEIEKPKIE…DYLKLFVALT (227 aa)). An alpha C-terminal domain (alpha-CTD) region spans residues 244 to 314 (QDKILEMTIE…LGLSLRKSED (71 aa)).

The protein belongs to the RNA polymerase alpha chain family. In terms of assembly, homodimer. The RNAP catalytic core consists of 2 alpha, 1 beta, 1 beta' and 1 omega subunit. When a sigma factor is associated with the core the holoenzyme is formed, which can initiate transcription.

The catalysed reaction is RNA(n) + a ribonucleoside 5'-triphosphate = RNA(n+1) + diphosphate. In terms of biological role, DNA-dependent RNA polymerase catalyzes the transcription of DNA into RNA using the four ribonucleoside triphosphates as substrates. The polypeptide is DNA-directed RNA polymerase subunit alpha (Heliobacterium modesticaldum (strain ATCC 51547 / Ice1)).